Here is a 255-residue protein sequence, read N- to C-terminus: Tryptophan synthase alpha chain (255 aa).

Active-site proton acceptor residues include Glu42 and Asp53.

This sequence belongs to the TrpA family. Tetramer of two alpha and two beta chains.

The enzyme catalyses (1S,2R)-1-C-(indol-3-yl)glycerol 3-phosphate + L-serine = D-glyceraldehyde 3-phosphate + L-tryptophan + H2O. Its pathway is amino-acid biosynthesis; L-tryptophan biosynthesis; L-tryptophan from chorismate: step 5/5. Functionally, the alpha subunit is responsible for the aldol cleavage of indoleglycerol phosphate to indole and glyceraldehyde 3-phosphate. The chain is Tryptophan synthase alpha chain from Wolinella succinogenes (strain ATCC 29543 / DSM 1740 / CCUG 13145 / JCM 31913 / LMG 7466 / NCTC 11488 / FDC 602W) (Vibrio succinogenes).